The chain runs to 315 residues: Probable diguanylate cyclase DgcF (315 aa).

A run of 4 helical transmembrane segments spans residues 10-30 (FSTG…GVLP), 41-61 (IALI…SLAF), 80-100 (LLTF…VIDI), and 116-136 (LGIA…AAIN). The GGDEF domain occupies 173–310 (QHLTVMLLDI…GRNRTSTMRY (138 aa)). Mg(2+)-binding residues include Asp-181 and Ile-182. Positions 189, 194, and 198 each coordinate substrate. Glu-224 lines the Mg(2+) pocket.

Homodimer. Mg(2+) is required as a cofactor.

The protein resides in the cell membrane. It carries out the reaction 2 GTP = 3',3'-c-di-GMP + 2 diphosphate. The protein operates within purine metabolism; 3',5'-cyclic di-GMP biosynthesis. In terms of biological role, catalyzes the synthesis of cyclic-di-GMP (c-di-GMP) via the condensation of 2 GTP molecules. The chain is Probable diguanylate cyclase DgcF from Escherichia coli (strain K12).